Consider the following 116-residue polypeptide: Iron-sulfur cluster insertion protein ErpA (116 aa).

Iron-sulfur cluster is bound by residues Cys44, Cys108, and Cys110.

The protein belongs to the HesB/IscA family. In terms of assembly, homodimer. Requires iron-sulfur cluster as cofactor.

Required for insertion of 4Fe-4S clusters for at least IspG. The protein is Iron-sulfur cluster insertion protein ErpA of Shewanella halifaxensis (strain HAW-EB4).